Consider the following 396-residue polypeptide: Immunoglobulin heavy constant gamma 4 (396 aa).

Residues 1 to 98 (ASTKGPSVFP…PSNTKVDKRV (98 aa)) are CH1. Residues 1 to 347 (ASTKGPSVFP…DGELDGLWTT (347 aa)) lie on the Extracellular side of the membrane. Ig-like domains follow at residues 6–99 (PSVF…KRVE), 118–217 (PSVF…KTIS), and 226–322 (PQVY…KSLS). A disulfide bridge links C27 with C83. Residues 99 to 110 (ESKYGPPCPSCP) are hinge. Residues 111–220 (APEFLGGPSV…SIEKTISKAK (110 aa)) form a CH2 region. Cystine bridges form between C141–C201 and C247–C305. A glycan (N-linked (GlcNAc...) (complex) asparagine) is linked at N177. The interval 221 to 327 (GQPREPQVYT…QKSLSLSLEL (107 aa)) is CH3. Residues 348–368 (ITIFITLFLLSVCYSATVTFF) form a helical membrane-spanning segment. Residues 369–396 (KVKWIFSSVVDLKQTIVPDYRNMIRQGA) are Cytoplasmic-facing.

As to quaternary structure, immunoglobulins are composed of two identical heavy chains and two identical light chains; disulfide-linked. Glycosylation on Asn-177 is required for interaction with Fc receptors and ability to activate the complement pathway. Post-translationally, (Microbial infection) Deglycosylation on Asn-177 by S.pyogenes EndoS or Endos2 endoglucosidases prevents interaction between immunoglobulin-gamma (IgG) and Fc receptors, impairing ability to activate the complement pathway.

The protein localises to the secreted. The protein resides in the cell membrane. Functionally, constant region of immunoglobulin heavy chains. Immunoglobulins, also known as antibodies, are membrane-bound or secreted glycoproteins produced by B lymphocytes. In the recognition phase of humoral immunity, the membrane-bound immunoglobulins serve as receptors which, upon binding of a specific antigen, trigger the clonal expansion and differentiation of B lymphocytes into immunoglobulins-secreting plasma cells. Secreted immunoglobulins mediate the effector phase of humoral immunity, which results in the elimination of bound antigens. The antigen binding site is formed by the variable domain of one heavy chain, together with that of its associated light chain. Thus, each immunoglobulin has two antigen binding sites with remarkable affinity for a particular antigen. The variable domains are assembled by a process called V-(D)-J rearrangement and can then be subjected to somatic hypermutations which, after exposure to antigen and selection, allow affinity maturation for a particular antigen. The polypeptide is Immunoglobulin heavy constant gamma 4 (Homo sapiens (Human)).